The primary structure comprises 351 residues: uncharacterized protein (351 aa).

Residues His23, His25, Lys151, His184, His212, and Asp270 each coordinate Zn(2+). N6-carboxylysine is present on Lys151.

The protein belongs to the metallo-dependent hydrolases superfamily. Phosphotriesterase family. It depends on Zn(2+) as a cofactor.

This is an uncharacterized protein from Mycoplasma pneumoniae (strain ATCC 29342 / M129 / Subtype 1) (Mycoplasmoides pneumoniae).